The sequence spans 212 residues: Ribonuclease HII (212 aa).

The RNase H type-2 domain maps to 1–206 (MARFGVDEAG…SRDALGAAEQ (206 aa)). A divalent metal cation-binding residues include D7, E8, and D100.

It belongs to the RNase HII family. Requires Mn(2+) as cofactor. Mg(2+) serves as cofactor.

Its subcellular location is the cytoplasm. It carries out the reaction Endonucleolytic cleavage to 5'-phosphomonoester.. Its function is as follows. Endonuclease that specifically degrades the RNA of RNA-DNA hybrids. The polypeptide is Ribonuclease HII (Halobacterium salinarum (strain ATCC 29341 / DSM 671 / R1)).